The sequence spans 199 residues: Riboflavin synthase (199 aa).

2 Lumazine-binding repeats span residues 1–95 (MFSG…IGGH) and 96–188 (FVSG…VDTI). Residues 4-6 (GII), 46-48 (CLT), 60-65 (DVTEET), 99-101 (GHV), Lys130, 139-141 (SLT), and 153-158 (SLIPET) each bind 2,4-dihydroxypteridine.

Homotrimer.

It catalyses the reaction 2 6,7-dimethyl-8-(1-D-ribityl)lumazine + H(+) = 5-amino-6-(D-ribitylamino)uracil + riboflavin. It participates in cofactor biosynthesis; riboflavin biosynthesis; riboflavin from 2-hydroxy-3-oxobutyl phosphate and 5-amino-6-(D-ribitylamino)uracil: step 2/2. Functionally, catalyzes the dismutation of two molecules of 6,7-dimethyl-8-ribityllumazine, resulting in the formation of riboflavin and 5-amino-6-(D-ribitylamino)uracil. The polypeptide is Riboflavin synthase (ribE) (Chlamydia trachomatis serovar D (strain ATCC VR-885 / DSM 19411 / UW-3/Cx)).